The chain runs to 389 residues: Chalcone synthase H2 (389 aa).

Cys164 is an active-site residue.

Belongs to the thiolase-like superfamily. Chalcone/stilbene synthases family.

It localises to the cytoplasm. It catalyses the reaction (E)-4-coumaroyl-CoA + 3 malonyl-CoA + 3 H(+) = 2',4,4',6'-tetrahydroxychalcone + 3 CO2 + 4 CoA. The protein operates within secondary metabolite biosynthesis; flavonoid biosynthesis. In terms of biological role, involved in the biosynthesis of prenylated phenolics natural products which contribute to the bitter taste of beer and display broad biological activities. Chalcone synthase that can use 4-coumaroyl-CoA to produce 4,2',4',6'-tetrahydroxychalcone (also termed naringenin-chalcone or chalcone) which can, under specific conditions, spontaneously isomerize into naringenin. In Humulus lupulus (European hop), this protein is Chalcone synthase H2.